A 196-amino-acid chain; its full sequence is Imidazole glycerol phosphate synthase subunit HisH (196 aa).

A Glutamine amidotransferase type-1 domain is found at 2-196 (KATLINYGVG…LRNFYSWVKR (195 aa)). The Nucleophile role is filled by Cys76. Catalysis depends on residues His175 and Glu177.

In terms of assembly, heterodimer of HisH and HisF.

The protein resides in the cytoplasm. It carries out the reaction 5-[(5-phospho-1-deoxy-D-ribulos-1-ylimino)methylamino]-1-(5-phospho-beta-D-ribosyl)imidazole-4-carboxamide + L-glutamine = D-erythro-1-(imidazol-4-yl)glycerol 3-phosphate + 5-amino-1-(5-phospho-beta-D-ribosyl)imidazole-4-carboxamide + L-glutamate + H(+). It catalyses the reaction L-glutamine + H2O = L-glutamate + NH4(+). It functions in the pathway amino-acid biosynthesis; L-histidine biosynthesis; L-histidine from 5-phospho-alpha-D-ribose 1-diphosphate: step 5/9. IGPS catalyzes the conversion of PRFAR and glutamine to IGP, AICAR and glutamate. The HisH subunit catalyzes the hydrolysis of glutamine to glutamate and ammonia as part of the synthesis of IGP and AICAR. The resulting ammonia molecule is channeled to the active site of HisF. The protein is Imidazole glycerol phosphate synthase subunit HisH of Sulfurisphaera tokodaii (strain DSM 16993 / JCM 10545 / NBRC 100140 / 7) (Sulfolobus tokodaii).